We begin with the raw amino-acid sequence, 479 residues long: Probable xyloglucan galactosyltransferase GT15 (479 aa).

Residues Met-1–Pro-20 are Cytoplasmic-facing. Residues Thr-21–Ser-40 form a helical; Signal-anchor for type II membrane protein membrane-spanning segment. At Gln-41–Asp-479 the chain is on the lumenal side. N-linked (GlcNAc...) asparagine glycosylation is found at Asn-155, Asn-242, Asn-285, and Asn-391.

It belongs to the glycosyltransferase 47 family. In terms of tissue distribution, expressed in roots, hypocotyls, cotyledons, leaves, stems and sepals.

The protein localises to the golgi apparatus membrane. Functionally, functions in xyloglucan synthesis by adding side chains to the xylosylated glucan backbone. Involved in the galactosylation of hemicellulose xyloglucan. The sequence is that of Probable xyloglucan galactosyltransferase GT15 from Arabidopsis thaliana (Mouse-ear cress).